Consider the following 196-residue polypeptide: ATP-dependent Clp protease proteolytic subunit (196 aa).

Ser-96 (nucleophile) is an active-site residue. Residue His-121 is part of the active site.

Belongs to the peptidase S14 family. In terms of assembly, fourteen ClpP subunits assemble into 2 heptameric rings which stack back to back to give a disk-like structure with a central cavity, resembling the structure of eukaryotic proteasomes.

Its subcellular location is the cytoplasm. The enzyme catalyses Hydrolysis of proteins to small peptides in the presence of ATP and magnesium. alpha-casein is the usual test substrate. In the absence of ATP, only oligopeptides shorter than five residues are hydrolyzed (such as succinyl-Leu-Tyr-|-NHMec, and Leu-Tyr-Leu-|-Tyr-Trp, in which cleavage of the -Tyr-|-Leu- and -Tyr-|-Trp bonds also occurs).. Cleaves peptides in various proteins in a process that requires ATP hydrolysis. Has a chymotrypsin-like activity. Plays a major role in the degradation of misfolded proteins. The protein is ATP-dependent Clp protease proteolytic subunit of Streptococcus pneumoniae (strain P1031).